The chain runs to 100 residues: Signal recognition particle 19 kDa protein (100 aa).

It belongs to the SRP19 family. As to quaternary structure, part of the signal recognition particle protein translocation system, which is composed of SRP and FtsY. Archaeal SRP consists of a 7S RNA molecule of 300 nucleotides and two protein subunits: SRP54 and SRP19.

The protein resides in the cytoplasm. Involved in targeting and insertion of nascent membrane proteins into the cytoplasmic membrane. Binds directly to 7S RNA and mediates binding of the 54 kDa subunit of the SRP. The chain is Signal recognition particle 19 kDa protein from Caldivirga maquilingensis (strain ATCC 700844 / DSM 13496 / JCM 10307 / IC-167).